The following is a 347-amino-acid chain: GMP reductase (347 aa).

An NADP(+)-binding site is contributed by 108–131 (DDFTKTRQILAMSSALRFICVDVA). Positions 181 and 183 each coordinate K(+). The active-site Thioimidate intermediate is the C186. 216–239 (IVGDGGCTCPGDVAKAFGGGADFV) is a binding site for NADP(+).

Belongs to the IMPDH/GMPR family. GuaC type 1 subfamily. As to quaternary structure, homotetramer.

It carries out the reaction IMP + NH4(+) + NADP(+) = GMP + NADPH + 2 H(+). Catalyzes the irreversible NADPH-dependent deamination of GMP to IMP. It functions in the conversion of nucleobase, nucleoside and nucleotide derivatives of G to A nucleotides, and in maintaining the intracellular balance of A and G nucleotides. This Aeromonas hydrophila subsp. hydrophila (strain ATCC 7966 / DSM 30187 / BCRC 13018 / CCUG 14551 / JCM 1027 / KCTC 2358 / NCIMB 9240 / NCTC 8049) protein is GMP reductase.